Here is a 359-residue protein sequence, read N- to C-terminus: Peptide chain release factor 1 (359 aa).

At Gln234 the chain carries N5-methylglutamine.

It belongs to the prokaryotic/mitochondrial release factor family. Methylated by PrmC. Methylation increases the termination efficiency of RF1.

The protein resides in the cytoplasm. In terms of biological role, peptide chain release factor 1 directs the termination of translation in response to the peptide chain termination codons UAG and UAA. This chain is Peptide chain release factor 1, found in Clavibacter michiganensis subsp. michiganensis (strain NCPPB 382).